Consider the following 288-residue polypeptide: Ankyrin repeat and SOCS box protein 8 (288 aa).

Ser17 carries the post-translational modification Phosphoserine. 4 ANK repeats span residues Gly52 to Ala81, Tyr85 to Ala113, Asn117 to Ala146, and Asn150 to Val179. Residues Gln235–Glu288 enclose the SOCS box domain.

Belongs to the ankyrin SOCS box (ASB) family. In terms of assembly, interacts with TBK1; this interaction promotes TBK1 proteasomal degradation. In terms of processing, phosphorylated by TBK1. Highest level of expression in skeletal muscle. Also expressed in heart, brain, placenta, liver, kidney and pancreas.

The protein localises to the cytoplasm. It functions in the pathway protein modification; protein ubiquitination. May be a substrate-recognition component of a SCF-like ECS (Elongin-Cullin-SOCS-box protein) E3 ubiquitin-protein ligase complex which mediates the ubiquitination and subsequent proteasomal degradation of target proteins. Inhibits IFN-beta production through the IRF3 signaling pathway by targeting TBK1 via 'Lys-48'-linked ubiquitination, leading to its proteasomal degradation. The sequence is that of Ankyrin repeat and SOCS box protein 8 (ASB8) from Homo sapiens (Human).